The primary structure comprises 207 residues: Ras-related protein Rab-7a (207 aa).

At T2 the chain carries N-acetylthreonine. The GTP site is built by S17, G18, V19, G20, K21, T22, S23, S34, N35, Y37, and T40. Position 22 (T22) interacts with Mg(2+). Residues 28–41 (YVNKKFSNQYKATI) carry the Switch 1 motif. 2 residues coordinate Mg(2+): T40 and D63. G66 lines the GTP pocket. The Switch 2 motif lies at 67-82 (QERFQSLGVAFYRGAD). S72 is subject to Phosphoserine. Positions 125, 126, 128, 156, and 157 each coordinate GTP. Residues K191 and K194 each participate in a glycyl lysine isopeptide (Lys-Gly) (interchain with G-Cter in ubiquitin) cross-link. 2 S-geranylgeranyl cysteine lipidation sites follow: C205 and C207. C207 is subject to Cysteine methyl ester.

The protein belongs to the small GTPase superfamily. Rab family. As to quaternary structure, interacts with NTRK1/TRKA. Interacts with RILP. Interacts with PSMA7. Interacts with RNF115. Interacts with and FYCO1. Interacts with the PIK3C3/VPS34-PIK3R4 complex. The GTP-bound form interacts with OSBPL1A. The GTP-bound form interacts with RAC1. Interacts with CLN3. Interacts with CHM, the substrate-binding subunit of the Rab geranylgeranyltransferase complex. Interacts with C9orf72. Does not interact with HPS4 and the BLOC-3 complex (heterodimer of HPS1 and HPS4). Interacts with CLN5. Interacts with PLEKHM1 (via N- and C-terminus). Interacts with PRPH; the interaction is direct. Interacts with VPS13A. The GDP-bound form interacts with RIMOC1. Interacts with the MON1A-CCZ1B complex and this interaction is enhanced in the presence of RIMOC1. Interacts with VPS39 and VPS41. Forms a ternary complex with LAMP2 and RUFY4; the interaction with LAMP2 is mediated by RUFY4 (via RUN and coiled coil domains). Mg(2+) serves as cofactor. In terms of processing, deubiquitination at Lys-191 and Lys-194 by USP32. Post-translationally, phosphorylated at Ser-72 by LRRK1; phosphorylation is dependent on protein kinase C (PKC) activation of LRRK1. Prenylated. Prenylation is required for association with cellular membranes. In terms of tissue distribution, expressed in osteoclasts and in neurons.

The protein localises to the cytoplasmic vesicle. It is found in the phagosome membrane. It localises to the late endosome membrane. Its subcellular location is the lysosome membrane. The protein resides in the melanosome membrane. The protein localises to the autophagosome membrane. It is found in the lipid droplet. It localises to the endosome membrane. Its subcellular location is the mitochondrion membrane. The catalysed reaction is GTP + H2O = GDP + phosphate + H(+). With respect to regulation, regulated by guanine nucleotide exchange factors (GEFs) which promote the exchange of bound GDP for free GTP. Regulated by GTPase activating proteins (GAPs) which increase the GTP hydrolysis activity. Inhibited by GDP dissociation inhibitors (GDIs). Functionally, the small GTPases Rab are key regulators of intracellular membrane trafficking, from the formation of transport vesicles to their fusion with membranes. Rabs cycle between an inactive GDP-bound form and an active GTP-bound form that is able to recruit to membranes different sets of downstream effectors directly responsible for vesicle formation, movement, tethering and fusion. In its active state, RAB7A binds to a variety of effector proteins playing a key role in the regulation of endo-lysosomal trafficking. Governs early-to-late endosomal maturation, microtubule minus-end as well as plus-end directed endosomal migration and positioning, and endosome-lysosome transport through different protein-protein interaction cascades. Also plays a central role in growth-factor-mediated cell signaling, nutrient-transporter-mediated nutrient uptake, neurotrophin transport in the axons of neurons and lipid metabolism. Also involved in regulation of some specialized endosomal membrane trafficking, such as maturation of melanosomes, pathogen-induced phagosomes (or vacuoles) and autophagosomes. Plays a role in the maturation and acidification of phagosomes that engulf pathogens, such as S.aureus and Mycobacteria. Plays a role in the fusion of phagosomes with lysosomes. In concert with RAC1, plays a role in regulating the formation of RBs (ruffled borders) in osteoclasts. Controls the endosomal trafficking and neurite outgrowth signaling of NTRK1/TRKA. Regulates the endocytic trafficking of the EGF-EGFR complex by regulating its lysosomal degradation. Involved in the ADRB2-stimulated lipolysis through lipophagy, a cytosolic lipase-independent autophagic pathway. Required for the exosomal release of SDCBP, CD63 and syndecan. Required for vesicular trafficking and cell surface expression of ACE2. May play a role in PRPH neuronal intermediate filament assembly. The protein is Ras-related protein Rab-7a of Rattus norvegicus (Rat).